A 631-amino-acid chain; its full sequence is Phosphomethylpyrimidine synthase (631 aa).

Residues N239, M268, Y297, H333, 353–355 (SRG), 394–397 (DGLR), and E433 each bind substrate. Zn(2+) is bound at residue H437. Y460 contacts substrate. Position 501 (H501) interacts with Zn(2+). Positions 581, 584, and 589 each coordinate [4Fe-4S] cluster.

This sequence belongs to the ThiC family. As to quaternary structure, homodimer. It depends on [4Fe-4S] cluster as a cofactor.

It carries out the reaction 5-amino-1-(5-phospho-beta-D-ribosyl)imidazole + S-adenosyl-L-methionine = 4-amino-2-methyl-5-(phosphooxymethyl)pyrimidine + CO + 5'-deoxyadenosine + formate + L-methionine + 3 H(+). Its pathway is cofactor biosynthesis; thiamine diphosphate biosynthesis. Catalyzes the synthesis of the hydroxymethylpyrimidine phosphate (HMP-P) moiety of thiamine from aminoimidazole ribotide (AIR) in a radical S-adenosyl-L-methionine (SAM)-dependent reaction. The polypeptide is Phosphomethylpyrimidine synthase (Salmonella paratyphi B (strain ATCC BAA-1250 / SPB7)).